Reading from the N-terminus, the 89-residue chain is Small ribosomal subunit protein uS15 (89 aa).

This sequence belongs to the universal ribosomal protein uS15 family. As to quaternary structure, part of the 30S ribosomal subunit. Forms a bridge to the 50S subunit in the 70S ribosome, contacting the 23S rRNA.

In terms of biological role, one of the primary rRNA binding proteins, it binds directly to 16S rRNA where it helps nucleate assembly of the platform of the 30S subunit by binding and bridging several RNA helices of the 16S rRNA. Functionally, forms an intersubunit bridge (bridge B4) with the 23S rRNA of the 50S subunit in the ribosome. In Porphyromonas gingivalis (strain ATCC 33277 / DSM 20709 / CIP 103683 / JCM 12257 / NCTC 11834 / 2561), this protein is Small ribosomal subunit protein uS15.